Consider the following 381-residue polypeptide: uncharacterized protein (381 aa).

The segment at 176 to 292 (HAAGKIKKSK…EPMVDETPQN (117 aa)) is disordered. Basic residues predominate over residues 177–186 (AAGKIKKSKN). The segment covering 187 to 212 (QKKDGTLSRPLGKKENKSVVKVKIEE) has biased composition (basic and acidic residues). A compositionally biased stretch (acidic residues) spans 276 to 286 (DEEDEDEEPMV).

This is an uncharacterized protein from Caenorhabditis elegans.